A 283-amino-acid chain; its full sequence is Digeranylgeranylglyceryl phosphate synthase (283 aa).

The next 8 helical transmembrane spans lie at 5–27 (VEII…AILA), 37–57 (AMLA…YFDY), 85–105 (LLFI…DTWI), 128–148 (PLIG…FAGY), 152–172 (EGLI…MTTA), 203–223 (AIIA…LYIY), 228–248 (INYL…AVLL), and 263–283 (LKTG…TITF).

Belongs to the UbiA prenyltransferase family. DGGGP synthase subfamily. Mg(2+) serves as cofactor.

It localises to the cell membrane. It catalyses the reaction sn-3-O-(geranylgeranyl)glycerol 1-phosphate + (2E,6E,10E)-geranylgeranyl diphosphate = 2,3-bis-O-(geranylgeranyl)-sn-glycerol 1-phosphate + diphosphate. Its pathway is membrane lipid metabolism; glycerophospholipid metabolism. Its function is as follows. Prenyltransferase that catalyzes the transfer of the geranylgeranyl moiety of geranylgeranyl diphosphate (GGPP) to the C2 hydroxyl of (S)-3-O-geranylgeranylglyceryl phosphate (GGGP). This reaction is the second ether-bond-formation step in the biosynthesis of archaeal membrane lipids. The chain is Digeranylgeranylglyceryl phosphate synthase from Methanobrevibacter smithii (strain ATCC 35061 / DSM 861 / OCM 144 / PS).